Consider the following 445-residue polypeptide: N-succinylarginine dihydrolase (445 aa).

Substrate is bound by residues 19–28, asparagine 110, and 137–138; these read AGLSFGNVAS and HR. Glutamate 174 is a catalytic residue. Arginine 214 is a binding site for substrate. Histidine 250 is an active-site residue. The substrate site is built by aspartate 252 and asparagine 363. The active-site Nucleophile is the cysteine 369.

It belongs to the succinylarginine dihydrolase family. As to quaternary structure, homodimer.

The enzyme catalyses N(2)-succinyl-L-arginine + 2 H2O + 2 H(+) = N(2)-succinyl-L-ornithine + 2 NH4(+) + CO2. The protein operates within amino-acid degradation; L-arginine degradation via AST pathway; L-glutamate and succinate from L-arginine: step 2/5. In terms of biological role, catalyzes the hydrolysis of N(2)-succinylarginine into N(2)-succinylornithine, ammonia and CO(2). The sequence is that of N-succinylarginine dihydrolase from Shewanella piezotolerans (strain WP3 / JCM 13877).